We begin with the raw amino-acid sequence, 277 residues long: Orotidine 5'-phosphate decarboxylase (277 aa).

Lys95 serves as the catalytic Proton donor.

It belongs to the OMP decarboxylase family. Type 2 subfamily.

The catalysed reaction is orotidine 5'-phosphate + H(+) = UMP + CO2. It functions in the pathway pyrimidine metabolism; UMP biosynthesis via de novo pathway; UMP from orotate: step 2/2. The protein is Orotidine 5'-phosphate decarboxylase of Mycolicibacterium vanbaalenii (strain DSM 7251 / JCM 13017 / BCRC 16820 / KCTC 9966 / NRRL B-24157 / PYR-1) (Mycobacterium vanbaalenii).